The chain runs to 791 residues: Nuclear cap-binding protein subunit 1-B (791 aa).

The disordered stretch occupies residues 1–24; it reads MSRRRHSDENDGGQPHKRRRTSEP. An MIF4G domain is found at 28 to 240; the sequence is EDRLESLICR…CLWAQVQKLK (213 aa). Residues 641–714 adopt a coiled-coil conformation; it reads LHSTIRKMNK…SEQKNLFLVI (74 aa). The interval 664–687 is disordered; sequence QRLAKQHKHRDSDDNDEDSGRKDG.

This sequence belongs to the NCBP1 family. As to quaternary structure, component of the nuclear cap-binding complex (CBC), a heterodimer composed of ncbp1/cbp80 and ncbp2/cbp20 that interacts with m7GpppG-capped RNA. Component of an alternative nuclear cap-binding complex (CBC) composed of ncbp1/cbp80 and ncbp3.

It is found in the nucleus. The protein localises to the cytoplasm. Functionally, component of the cap-binding complex (CBC), which binds cotranscriptionally to the 5'-cap of pre-mRNAs and is involved in various processes such as pre-mRNA splicing, translation regulation, nonsense-mediated mRNA decay, RNA-mediated gene silencing (RNAi) by microRNAs (miRNAs) and mRNA export. The CBC complex is involved in mRNA export from the nucleus, leading to the recruitment of the mRNA export machinery to the 5'-end of mRNA and to mRNA export in a 5' to 3' direction through the nuclear pore. The CBC complex is also involved in mediating U snRNA and intronless mRNAs export from the nucleus. The CBC complex is essential for a pioneer round of mRNA translation, before steady state translation when the CBC complex is replaced by cytoplasmic cap-binding protein eIF4E. The pioneer round of mRNA translation mediated by the CBC complex plays a central role in nonsense-mediated mRNA decay (NMD), NMD only taking place in mRNAs bound to the CBC complex, but not on eIF4E-bound mRNAs. The CBC complex enhances NMD in mRNAs containing at least one exon-junction complex (EJC), promoting the interaction between UPF1 and UPF2. The CBC complex is also involved in 'failsafe' NMD, which is independent of the EJC complex, while it does not participate in Staufen-mediated mRNA decay (SMD). During cell proliferation, the CBC complex is also involved in microRNAs (miRNAs) biogenesis via its interaction with SRRT/ARS2 and is required for miRNA-mediated RNA interference. The CBC complex also acts as a negative regulator of parn, thereby acting as an inhibitor of mRNA deadenylation. In the CBC complex, NCBP1/CBP80 does not bind directly capped RNAs (m7GpppG-capped RNA) but is required to stabilize the movement of the N-terminal loop of NCBP2/CBP20 and lock the CBC into a high affinity cap-binding state with the cap structure. Associates with NCBP3 to form an alternative cap-binding complex (CBC) which plays a key role in mRNA export. The conventional CBC with NCBP2 binds both small nuclear RNA (snRNA) and messenger (mRNA) and is involved in their export from the nucleus whereas the alternative CBC with NCBP3 does not bind snRNA and associates only with mRNA thereby playing a role only in mRNA export. This Xenopus laevis (African clawed frog) protein is Nuclear cap-binding protein subunit 1-B (ncbp1-b).